We begin with the raw amino-acid sequence, 195 residues long: Peroxiredoxin bcp1 (195 aa).

In terms of domain architecture, Thioredoxin spans 46 to 168 (IQVGDVIPDI…SHWIFEKGTG (123 aa)). Catalysis depends on Cys89, which acts as the Cysteine sulfenic acid (-SOH) intermediate. Residues Cys89 and Cys94 are joined by a disulfide bond.

This sequence belongs to the peroxiredoxin family. BCP/PrxQ subfamily. As to quaternary structure, monomer. In terms of processing, the active site is a conserved redox-active cysteine residue, the peroxidatic cysteine (C(P)), which makes the nucleophilic attack on the peroxide substrate. The peroxide oxidizes the C(P)-SH to cysteine sulfenic acid (C(P)-SOH), which then reacts with another cysteine residue, the resolving cysteine (C(R)), to form a disulfide bridge. The disulfide is subsequently reduced by an appropriate electron donor to complete the catalytic cycle. In this atypical 2-Cys peroxiredoxin, C(R) is present in the same subunit to form an intramolecular disulfide. The disulfide is subsequently reduced by thioredoxin.

The protein localises to the cytoplasm. The protein resides in the nucleus. It carries out the reaction a hydroperoxide + [thioredoxin]-dithiol = an alcohol + [thioredoxin]-disulfide + H2O. Thiol-specific peroxidase that catalyzes the reduction of hydrogen peroxide and organic hydroperoxides to water and alcohols, respectively. Plays a role in cell protection against oxidative stress by detoxifying peroxides and as sensor of hydrogen peroxide-mediated signaling events. Acts as a scavenger of H(2)O(2). This is Peroxiredoxin bcp1 (bcp1) from Schizosaccharomyces pombe (strain 972 / ATCC 24843) (Fission yeast).